A 305-amino-acid chain; its full sequence is Mitochondrial uncoupling protein 3 (305 aa).

Solcar repeat units follow at residues 14–100 (TRIL…LKGL), 112–204 (LPLA…AKHF), and 213–299 (DNIF…FRLL). The next 6 helical transmembrane spans lie at 16-36 (ILLASLSAMVAESVTFPIDLT), 69-89 (VIGLYKGLSPAIIRHLFYTPI), 118-138 (ALVGGFSGVIAQVVASPADLV), 178-198 (KGVLPNIQRAFLVNMGELACY), 219-239 (TLASIMSGLASTSLSCPADVV), and 272-292 (WKGFFPTWARLGPWQFVFWVS).

This sequence belongs to the mitochondrial carrier (TC 2.A.29) family.

It localises to the mitochondrion inner membrane. In terms of biological role, PUMPS are mitochondrial transporter proteins that create proton leaks across the inner mitochondrial membrane, thus uncoupling oxidative phosphorylation. This leads to a decrease in the efficiency of oxidative phosphorylation and an increase in heat production. May be involved in protecting plant cells against oxidative stress damage. The polypeptide is Mitochondrial uncoupling protein 3 (PUMP3) (Arabidopsis thaliana (Mouse-ear cress)).